A 1369-amino-acid chain; its full sequence is Mediator of RNA polymerase II transcription subunit 23 (1369 aa).

Positions 1337–1369 are disordered; sequence TESAAPPPPPMNSGSPAPQPNQVPVSVPLTVTQ. Positions 1341-1357 are enriched in pro residues; it reads APPPPPMNSGSPAPQPN.

This sequence belongs to the Mediator complex subunit 23 family. In terms of assembly, component of the Mediator complex.

It is found in the nucleus. Component of the Mediator complex, a coactivator involved in the regulated transcription of nearly all RNA polymerase II-dependent genes. Mediator functions as a bridge to convey information from gene-specific regulatory proteins to the basal RNA polymerase II transcription machinery. Mediator is recruited to promoters by direct interactions with regulatory proteins and serves as a scaffold for the assembly of a functional preinitiation complex with RNA polymerase II and the general transcription factors. This chain is Mediator of RNA polymerase II transcription subunit 23 (med23), found in Xenopus laevis (African clawed frog).